The primary structure comprises 554 residues: Sesquithujene synthase A (554 aa).

Residues D308 and D312 each coordinate Mg(2+). Substrate is bound by residues D308 and D312. A DDXXD motif motif is present at residues D308–D312. The segment at S407–N411 is determine the stereoselectivity of the enzyme. 2 residues coordinate substrate: R449 and N452. The Mg(2+) site is built by N452, S456, and E460.

The protein belongs to the terpene synthase family. Monomer. Mg(2+) serves as cofactor. The cofactor is Mn(2+). In terms of tissue distribution, highly expressed in the husk. Detected in leaves.

Its subcellular location is the cytoplasm. It catalyses the reaction (2E,6E)-farnesyl diphosphate = sesquithujene + diphosphate. The enzyme catalyses (2Z,6Z)-farnesyl diphosphate = (1S,5S,6S)-alpha-bergamotene + diphosphate. It carries out the reaction (2E,6E)-farnesyl diphosphate = (E)-beta-farnesene + diphosphate. The catalysed reaction is (2E,6E)-farnesyl diphosphate = (S)-beta-bisabolene + diphosphate. It catalyses the reaction (2Z,6E)-farnesyl diphosphate = (-)-beta-curcumene + diphosphate. The enzyme catalyses (2E,6E)-farnesyl diphosphate = gamma-curcumene + diphosphate. It carries out the reaction (2E,6E)-farnesyl diphosphate = sesquisabinene B + diphosphate. The protein operates within secondary metabolite biosynthesis; terpenoid biosynthesis. In terms of biological role, sesquiterpene synthase involved in the production after herbivore attack of a blend of volatiles that attracts natural enemies of herbivores. Converts farnesyl diphosphate to sesquithujene, (S)-beta-bisabolene, (Z)-alpha-bergamotene, sesquisabinene B and several minor products. Can also act in vitro as a monoterpene synthase, converting geranyl diphosphate to (S)-(-)-limonene, beta-myrcene and 11 other monoterpenes. This is Sesquithujene synthase A from Zea mays (Maize).